Consider the following 376-residue polypeptide: Lactosylceramide 1,3-N-acetyl-beta-D-glucosaminyltransferase (376 aa).

The Cytoplasmic portion of the chain corresponds to 1-13; the sequence is MRLFVSRRVKRWK. A helical; Signal-anchor for type II membrane protein transmembrane segment spans residues 14–34; the sequence is IFHFFVTCFILSFMVFWSPIN. The Lumenal segment spans residues 35-376; it reads NYIMSHMKSY…NSYPCWAAFA (342 aa). N-linked (GlcNAc...) asparagine glycosylation is present at N57.

This sequence belongs to the glycosyltransferase 31 family. Highly expressed in adult spleen, placenta and cerebellar Purkinje cells where it colocalizes with HNK-1. Expressed at lower level in brain, lung, thymus and muscle.

It is found in the golgi apparatus membrane. The catalysed reaction is a beta-D-Gal-(1-&gt;4)-beta-D-Glc-(1&lt;-&gt;1)-Cer(d18:1(4E)) + UDP-N-acetyl-alpha-D-glucosamine = a beta-D-GlcNAc-(1-&gt;3)-beta-D-Gal-(1-&gt;4)-beta-D-Glc-(1&lt;-&gt;1)-Cer(d18:1(4E)) + UDP + H(+). The enzyme catalyses a neolactoside nLc4Cer(d18:1(4E)) + UDP-N-acetyl-alpha-D-glucosamine = a neolactoside IV(3)-beta-GlcNAc-nLc4Cer(d18:1(4E)) + UDP + H(+). It participates in protein modification; protein glycosylation. Beta-1,3-N-acetylglucosaminyltransferase that plays a key role in the synthesis of lacto- or neolacto-series carbohydrate chains on glycolipids, notably by participating in biosynthesis of HNK-1 and Lewis X carbohydrate structures. Has strong activity toward lactosylceramide (LacCer) and neolactotetraosylceramide (nLc(4)Cer; paragloboside), resulting in the synthesis of Lc(3)Cer and neolactopentaosylceramide (nLc(5)Cer), respectively. Plays a central role in regulating neolacto-series glycolipid synthesis during embryonic development. This is Lactosylceramide 1,3-N-acetyl-beta-D-glucosaminyltransferase from Mus musculus (Mouse).